Consider the following 119-residue polypeptide: MFSLKRQQGASFEQQARLFLESQGLQFIAANQNFKCGELDLVMLDGETIVFVEVRQRKNDHFGSAVESVDWQKQQKWINAASLWLATQNHSLEDTDCRFDLVAFGATASNVQWLKNFIE.

This sequence belongs to the UPF0102 family.

The protein is UPF0102 protein MS1289 of Mannheimia succiniciproducens (strain KCTC 0769BP / MBEL55E).